Reading from the N-terminus, the 69-residue chain is Probable molybdenum-pterin-binding protein (69 aa).

The Mop domain occupies 2-68; sequence KISARNQLKG…IKATSVMVGV (67 aa).

It to C.pasteurianum MOP proteins.

Binds one mole of molybdenum per mole of protein and contains a pterin. In Haemophilus influenzae (strain ATCC 51907 / DSM 11121 / KW20 / Rd), this protein is Probable molybdenum-pterin-binding protein.